Here is a 162-residue protein sequence, read N- to C-terminus: Cytochrome c-type biogenesis protein CcmE (162 aa).

Topologically, residues 1–7 (MTRKQRR) are cytoplasmic. The helical; Signal-anchor for type II membrane protein transmembrane segment at 8 to 28 (LTMIGGSLVVLAIAAALVLNA) threads the bilayer. Topologically, residues 29 to 162 (LRDSIVFFST…EASGKQGVSQ (134 aa)) are periplasmic. 2 residues coordinate heme: His122 and Tyr126. Residues 138–162 (QGHWKDDYGPQAGAVEASGKQGVSQ) are disordered.

It belongs to the CcmE/CycJ family.

The protein resides in the cell inner membrane. Heme chaperone required for the biogenesis of c-type cytochromes. Transiently binds heme delivered by CcmC and transfers the heme to apo-cytochromes in a process facilitated by CcmF and CcmH. The sequence is that of Cytochrome c-type biogenesis protein CcmE from Nitrobacter hamburgensis (strain DSM 10229 / NCIMB 13809 / X14).